A 381-amino-acid chain; its full sequence is Putative steryl acetyl hydrolase mug81 (381 aa).

At 1–9 the chain is on the cytoplasmic side; sequence MISLSLLYR. Residues 10 to 30 traverse the membrane as a helical; Signal-anchor for type II membrane protein segment; that stretch reads ILTLPIILVGTTILYFTIGTN. The Lumenal segment spans residues 31–381; the sequence is FPHDELRHNL…YTFLRETFEE (351 aa). Residues 125 to 127 carry the Involved in the stabilization of the negatively charged intermediate by the formation of the oxyanion hole motif; sequence HGG. Asparagine 193 is a glycosylation site (N-linked (GlcNAc...) asparagine). Serine 200 is an active-site residue.

The protein belongs to the 'GDXG' lipolytic enzyme family.

The protein localises to the cytoplasm. The protein resides in the endoplasmic reticulum membrane. Functionally, required for the deacetylation of acetylated sterols. Has a role in meiosis. The chain is Putative steryl acetyl hydrolase mug81 (mug180) from Schizosaccharomyces pombe (strain 972 / ATCC 24843) (Fission yeast).